The sequence spans 293 residues: Protein transport protein yif1 (293 aa).

The Cytoplasmic portion of the chain corresponds to 1 to 139 (MPPKLYHPQP…PPAEDLNSPD (139 aa)). Residues 140 to 160 (MYIPLMAFTTHILLLCALAGL) form a helical membrane-spanning segment. The Lumenal segment spans residues 161–175 (QDDFQPELFGLRASK). A helical transmembrane segment spans residues 176-196 (ACAVVLVEFLATRLGCYLLNI). The Cytoplasmic segment spans residues 197–201 (SSQSQ). A helical membrane pass occupies residues 202 to 222 (VLDLLAFSGYKFVGLILTSLS). The Lumenal portion of the chain corresponds to 223–226 (KLFE). A helical membrane pass occupies residues 227-247 (MPWVTRFVFLYMYLATAFFLL). Residues 248-271 (RSLKYAVLPESTMAINATITSHQR) lie on the Cytoplasmic side of the membrane. The chain crosses the membrane as a helical span at residues 272–292 (SRRIYFLFFIAASQILFMYVL). A topological domain (lumenal) is located at residue S293.

It belongs to the YIF1 family. Component of the yip1-yif1 complex, composed of at least yif1, yip1 and yos1. The complex interacts with the ER to Golgi SNAREs bos1 and sec22.

It is found in the endoplasmic reticulum membrane. It localises to the golgi apparatus membrane. The protein resides in the cytoplasmic vesicle. The protein localises to the COPII-coated vesicle. In terms of biological role, required for fusion of ER-derived vesicles with the Golgi during ER-to-Golgi protein transport. May be involved in proper membrane localization of Rab GTPases. The sequence is that of Protein transport protein yif1 from Schizosaccharomyces pombe (strain 972 / ATCC 24843) (Fission yeast).